Consider the following 399-residue polypeptide: Serine/threonine-protein kinase PknL (399 aa).

The Cytoplasmic segment spans residues 1-368; that stretch reads MVEAGTRDPL…FIWARQHARR (368 aa). Residues 19–278 enclose the Protein kinase domain; the sequence is YLVQAKIASG…IAMGADLEAI (260 aa). Residues 25–33 and Lys-48 contribute to the ATP site; that span reads IASGGTSTV. The active-site Proton acceptor is the Asp-142. The segment at 312 to 346 is disordered; that stretch reads GQLGAKPVHHPTRQLTRQPGDCSEPASGSEPEHEP. A helical transmembrane segment spans residues 369 to 389; sequence MVLVWVSVVLAITGLVASAAW. Residues 390-399 lie on the Extracellular side of the membrane; sequence TIGSNLSGLL.

The protein belongs to the protein kinase superfamily. Ser/Thr protein kinase family. In terms of processing, autophosphorylated.

It localises to the cell membrane. It carries out the reaction L-seryl-[protein] + ATP = O-phospho-L-seryl-[protein] + ADP + H(+). It catalyses the reaction L-threonyl-[protein] + ATP = O-phospho-L-threonyl-[protein] + ADP + H(+). This Mycobacterium bovis (strain ATCC BAA-935 / AF2122/97) protein is Serine/threonine-protein kinase PknL (pknL).